Here is a 279-residue protein sequence, read N- to C-terminus: Zinc finger CCCH domain-containing protein 42 (279 aa).

Positions 11-77 (SDHRSSSTPM…KAAVEPQEYP (67 aa)) are disordered. A compositionally biased stretch (low complexity) spans 16–39 (SSTPMATTTSSSASDPAAISPTPS). C3H1-type zinc fingers lie at residues 79–107 (RPGV…HPAK), 120–148 (RPGE…HPPD), and 186–214 (RPGT…HPNS).

The chain is Zinc finger CCCH domain-containing protein 42 from Oryza sativa subsp. japonica (Rice).